The chain runs to 307 residues: Glycine--tRNA ligase alpha subunit (307 aa).

Belongs to the class-II aminoacyl-tRNA synthetase family. In terms of assembly, tetramer of two alpha and two beta subunits.

It localises to the cytoplasm. It carries out the reaction tRNA(Gly) + glycine + ATP = glycyl-tRNA(Gly) + AMP + diphosphate. The polypeptide is Glycine--tRNA ligase alpha subunit (Aeromonas salmonicida (strain A449)).